The primary structure comprises 802 residues: Serine/threonine-protein kinase zyg-8 (802 aa).

A compositionally biased stretch (polar residues) spans 1–13 (MPQTSAWQLNDTT). Positions 1–102 (MPQTSAWQLN…SAPSTSSAHR (102 aa)) are disordered. Residues 15 to 24 (RPPPPPPPPG) are compositionally biased toward pro residues. Positions 89 to 99 (SPSSSAPSTSS) are enriched in low complexity. 2 consecutive Doublecortin domains span residues 211 to 298 (KRLR…VDYS) and 340 to 423 (RIIK…ADDL). The disordered stretch occupies residues 430–470 (HKSVGSGTSSNMRRTSRRSTMPNRNESLRHDRSGSVIPDQD). Residues 434 to 454 (GSGTSSNMRRTSRRSTMPNRN) show a composition bias toward low complexity. The region spanning 482 to 743 (FQLVRLIGDG…AGELLNDEWM (262 aa)) is the Protein kinase domain. Residues 488–496 (IGDGNTAVV) and Lys-512 contribute to the ATP site. Asp-604 (proton acceptor) is an active-site residue.

The protein belongs to the protein kinase superfamily. CAMK Ser/Thr protein kinase family. CaMK subfamily. In terms of assembly, interacts with tac-1. As to expression, expressed in AFD thermosensory neurons. Expressed in cells near the nerve ring, in motor neurons in the ventral nerve cord and in the six touch receptor neurons including ALML/R, PLML/R and AVM and PVM. Expressed in hypodermal and neural tissues and in the germline.

It localises to the cytoplasm. The protein resides in the cytoskeleton. The protein localises to the microtubule organizing center. It is found in the centrosome. Its subcellular location is the spindle. It catalyses the reaction L-seryl-[protein] + ATP = O-phospho-L-seryl-[protein] + ADP + H(+). The catalysed reaction is L-threonyl-[protein] + ATP = O-phospho-L-threonyl-[protein] + ADP + H(+). In terms of biological role, probable kinase. Kinase activity may be involved in positioning of spindle poles in meiosis and mitosis. Plays a role in spindle positioning during asymmetric division of one-cell stage embryos. Affects spindle position by promoting microtubule assembly during anaphase. Plays a role in the assembly and stability of oocyte spindle, perhaps balancing the forces in the spindle and maintaining their morphology during metaphase. Plays a role in cell division and in embryonic viability up until gastrulation. Required for neuronal morphology and polarity and restricting ectopic process outgrowth; probably as a result of a role in maintaining microtubule integrity. Involved in maintaining neuronal microtubule number, length and packing. May promote axonal and synaptic growth. Plays a role in regulating thermotaxis responses in AFD thermosensory neurons. Required for touch sensitivity in adult touch response receptor neurons. The sequence is that of Serine/threonine-protein kinase zyg-8 from Caenorhabditis elegans.